Here is a 111-residue protein sequence, read N- to C-terminus: Ribosome-binding factor A (111 aa).

It belongs to the RbfA family. As to quaternary structure, monomer. Binds 30S ribosomal subunits, but not 50S ribosomal subunits or 70S ribosomes.

The protein resides in the cytoplasm. Functionally, one of several proteins that assist in the late maturation steps of the functional core of the 30S ribosomal subunit. Associates with free 30S ribosomal subunits (but not with 30S subunits that are part of 70S ribosomes or polysomes). Required for efficient processing of 16S rRNA. May interact with the 5'-terminal helix region of 16S rRNA. This chain is Ribosome-binding factor A, found in Helicobacter pylori (strain G27).